We begin with the raw amino-acid sequence, 154 residues long: Pseudo histidine-containing phosphotransfer protein 6 (154 aa).

An N-acetylmethionine modification is found at M1. The HPt domain occupies S41–L137.

As to quaternary structure, interacts with AHK5.

It is found in the cytoplasm. The protein resides in the cytosol. It localises to the nucleus. Functionally, functions as a two-component phosphorelay mediator between cytokinin sensor histidine kinases and response regulators (B-type ARRs). Plays an important role in propagating cytokinin signal transduction. The sequence is that of Pseudo histidine-containing phosphotransfer protein 6 (AHP6) from Arabidopsis thaliana (Mouse-ear cress).